A 122-amino-acid chain; its full sequence is Large ribosomal subunit protein uL14 (122 aa).

It belongs to the universal ribosomal protein uL14 family. As to quaternary structure, part of the 50S ribosomal subunit. Forms a cluster with proteins L3 and L19. In the 70S ribosome, L14 and L19 interact and together make contacts with the 16S rRNA in bridges B5 and B8.

Functionally, binds to 23S rRNA. Forms part of two intersubunit bridges in the 70S ribosome. This chain is Large ribosomal subunit protein uL14, found in Nitratiruptor sp. (strain SB155-2).